The sequence spans 1009 residues: MGQLCWLPLLAPLLLLRPPGVQSAGPIRAFVVPHSHMDVGWVYTVQESMRAYAANVYTSVVEELARGQQRRFIAVEQEFFRLWWDGVASDQQKYQVRQLLEEGRLEFVIGGQVMHDEAVTHLDDQILQLTEGHGFLYETFGIRPQFSWHVDPFGASATTPTLFALAGFNAHLGSRIDYDLKAAMQEARGLQFVWRGSPSLSERQEIFTHIMDQYSYCTPSHIPFSNRSGFYWNGVAVFPKPPQDGVYPNMSEPVTPANINLYAEALVANVKQRAAWFRTPHVLWPWGCDKQFFNASVQFANMDPLLDHINSHAAELGVSVQYATLGDYFRALHALNVTWRVRDHHDFLPYSTEPFQAWTGFYTSRSSLKGLARRASALLYAGESMFTRYLWPAPRGHLDPTWALQQLQQLRWAVSEVQHHDAITGTESPKVRDMYATHLASGMLGMRKLMASIVLDELQPQAPMAASSDAGPAGHFASVYNPLAWTVTTIVTLTVGFPGVRVTDEAGHPVPSQIQNSTETPSAYDLLILTTIPGLSYRHYNIRPTAGAQEGTQEPAATVASTLQFGRRLRRRTSHAGRYLVPVANDCYIVLLDQDTNLMHSIWERQSNRTVRVTQEFLEYHVNGDVKQGPISDNYLFTPGKAAVPAWEAVEMEIVAGQLVTEIRQYFYRNMTAQNYTYAIRSRLTHVPQGHDGELLCHRIEQEYQAGPLELNREAVLRTSTNLNSQQVIYSDNNGYQMQRRPYVSYVNNSIARNYYPMVQSAFMEDGKSRLVLLSERAHGISSQGNGQVEVMLHRRLWNNFDWDLGYNLTLNDTSVVHPVLWLLLGSWSLTTALRQRSALALQHRPVVLFGDLAGTAPKLPGPQQQEAVTLPPNLHLQILSIPGWRYSSNHTEHSQNLRKGHRGEAQADLRRVLLRLYHLYEVGEDPVLSQPVTVNLEAVLQALGSVVAVEERSLTGTWDLSMLHRWSWRTGPGRHRGDTTSPSRPPGGPIITVHPKEIRTFFIHFQQQ.

Positions 1–23 are cleaved as a signal peptide; sequence MGQLCWLPLLAPLLLLRPPGVQS. Residues H36, D38, and D151 each coordinate Zn(2+). D151 serves as the catalytic Nucleophile. Residues N226, N249, N294, and N336 are each glycosylated (N-linked (GlcNAc...) asparagine). H420 lines the Zn(2+) pocket. N-linked (GlcNAc...) asparagine glycans are attached at residues N516, N608, N670, N675, N748, N808, N812, and N890. The interval 972–991 is disordered; the sequence is GPGRHRGDTTSPSRPPGGPI.

Belongs to the glycosyl hydrolase 38 family. It depends on Zn(2+) as a cofactor.

The protein localises to the secreted. It carries out the reaction Hydrolysis of terminal, non-reducing alpha-D-mannose residues in alpha-D-mannosides.. The sequence is that of Epididymis-specific alpha-mannosidase (MAN2B2) from Homo sapiens (Human).